A 403-amino-acid polypeptide reads, in one-letter code: Leu/Ile/Val-binding protein homolog 8 (403 aa).

An N-terminal signal peptide occupies residues 1-26 (MRLSRLLIGASLGVALSSTVFTAALA).

It belongs to the leucine-binding protein family.

Component of an amino-acid transport system. In Brucella abortus (strain 2308), this protein is Leu/Ile/Val-binding protein homolog 8.